Consider the following 305-residue polypeptide: Tyrosine recombinase XerD (305 aa).

Residues 9–94 (MQDFGYVEQF…AIRRLFQYLH (86 aa)) enclose the Core-binding (CB) domain. Residues 115–299 (RLPKDISEEQ…ATERLKQIHS (185 aa)) form the Tyr recombinase domain. Residues arginine 155, lysine 179, histidine 251, arginine 254, and histidine 277 contribute to the active site. Tyrosine 286 acts as the O-(3'-phospho-DNA)-tyrosine intermediate in catalysis.

Belongs to the 'phage' integrase family. XerD subfamily. In terms of assembly, forms a cyclic heterotetrameric complex composed of two molecules of XerC and two molecules of XerD.

It localises to the cytoplasm. In terms of biological role, site-specific tyrosine recombinase, which acts by catalyzing the cutting and rejoining of the recombining DNA molecules. The XerC-XerD complex is essential to convert dimers of the bacterial chromosome into monomers to permit their segregation at cell division. It also contributes to the segregational stability of plasmids. This Vibrio vulnificus (strain CMCP6) protein is Tyrosine recombinase XerD.